The following is a 551-amino-acid chain: Solute carrier family 22 member 4 (551 aa).

Over 1 to 20 (MRDYDEAIAFLGEWGPFQRL) the chain is Cytoplasmic. A helical transmembrane segment spans residues 21–41 (IFFLLSASIIPNGFNGMSVVF). The Extracellular segment spans residues 42–141 (LAGTPEHRCR…WNLVCEDNWK (100 aa)). 3 N-linked (GlcNAc...) asparagine glycosylation sites follow: N57, N64, and N91. The chain crosses the membrane as a helical span at residues 142-162 (VPLTTSLFFVGVLLGSFVSGQ). Topologically, residues 163 to 171 (LSDRFGRKN) are cytoplasmic. Residues 172-192 (VLFATMAVQTGFSFLQIFSIS) form a helical membrane-spanning segment. Over 193–197 (WEMFT) the chain is Extracellular. The helical transmembrane segment at 198–218 (VLFLIVGMGQISNYVVAFILG) threads the bilayer. 218 to 225 (GTEILGKS) provides a ligand contact to ATP. The Cytoplasmic segment spans residues 219–232 (TEILGKSVRIIFST). A helical membrane pass occupies residues 233–253 (LGVCTFFAVGYMLLPLFAYFI). Residues 254-257 (RDWR) are Extracellular-facing. The chain crosses the membrane as a helical span at residues 258 to 278 (MLLLALTVPGVLCVPLWWFIP). Residues 279-337 (ESPRWLISQRRFREAEDIIQKAAKMNNIAVPAVIFDSVEELNPLKQQKAFILDLFRTWN) lie on the Cytoplasmic side of the membrane. The helical transmembrane segment at 338–358 (IAIMTIMSLLLWMLTSVGYFA) threads the bilayer. Residues 359 to 371 (LSLDTPNLHGDAY) are Extracellular-facing. The chain crosses the membrane as a helical span at residues 372–392 (LNCFLSALIEIPAYITAWLLL). The Cytoplasmic segment spans residues 393–399 (RTLPRRY). A helical membrane pass occupies residues 400-420 (IIAAVLFWGGGVLLFIQLVPV). Residues 421–426 (DYYFLS) are Extracellular-facing. Residues 427-447 (IGLVMLGKFGITSAFSMLYVF) form a helical membrane-spanning segment. At 448–460 (TAELYPTMVRNMA) the chain is on the cytoplasmic side. The helical transmembrane segment at 461-481 (VGVTSMASRVGSIIAPYFVYL) threads the bilayer. Residues 482–486 (GAYNR) lie on the Extracellular side of the membrane. The chain crosses the membrane as a helical span at residues 487–507 (MLPYIVMGSLTVLIGILTLFF). Residues 508–551 (PESLGMTLPETLEQMQKVKWFRSGKKTRDSMETEENPKVLITAF) lie on the Cytoplasmic side of the membrane.

It belongs to the major facilitator (TC 2.A.1) superfamily. Organic cation transporter (TC 2.A.1.19) family. In terms of assembly, interacts with PDZK1.

Its subcellular location is the apical cell membrane. The protein resides in the basal cell membrane. The protein localises to the mitochondrion membrane. It carries out the reaction ergothioneine(out) + Na(+)(out) = ergothioneine(in) + Na(+)(in). The catalysed reaction is acetylcholine(in) = acetylcholine(out). It catalyses the reaction (R)-carnitine(out) + Na(+)(out) = (R)-carnitine(in) + Na(+)(in). The enzyme catalyses glycine betaine(out) + Na(+)(out) = glycine betaine(in) + Na(+)(in). With respect to regulation, allosterically activated by intracellular ATP. Transporter that mediates the transport of endogenous and microbial zwitterions and organic cations. Functions as a Na(+)-dependent and pH-dependent high affinity microbial symporter of potent food-derived antioxidant ergothioeine. Transports one sodium ion with one ergothioeine molecule. Involved in the absorption of ergothioneine from the luminal/apical side of the small intestine and renal tubular cells, and into non-parenchymal liver cells, thereby contributing to maintain steady-state ergothioneine level in the body. Also mediates the bidirectional transport of acetycholine, although the exact transport mechanism has not been fully identified yet. Most likely exports anti-inflammatory acetylcholine in non-neuronal tissues, thereby contributing to the non-neuronal cholinergic system. Displays a general physiological role linked to better survival by controlling inflammation and oxidative stress, which may be related to ergothioneine and acetycholine transports. May also function as a low-affinity Na(+)-dependent transporter of L-carnitine through the mitochondrial membrane, thereby maintaining intracellular carnitine homeostasis. May contribute to regulate the transport of cationic compounds in testis across the blood-testis-barrier. This chain is Solute carrier family 22 member 4 (SLC22A4), found in Papio anubis (Olive baboon).